A 309-amino-acid chain; its full sequence is 2-oxoacid:ferredoxin oxidoreductase 2, subunit beta (309 aa).

[4Fe-4S] cluster-binding residues include cysteine 17, cysteine 20, and cysteine 51. Thiamine diphosphate-binding positions include 49–52 and histidine 68; that span reads IGCS. Residue aspartate 93 participates in Mg(2+) binding. Thiamine diphosphate is bound at residue 94–95; it reads GD. Mg(2+)-binding residues include asparagine 121 and valine 123. Residue 125–126 participates in thiamine diphosphate binding; it reads GL. Position 200 (cysteine 200) interacts with [4Fe-4S] cluster.

In terms of assembly, heterodimer composed of an alpha and a beta subunit. It depends on [4Fe-4S] cluster as a cofactor. Thiamine diphosphate is required as a cofactor. Mg(2+) serves as cofactor.

The enzyme catalyses a 2-oxocarboxylate + 2 oxidized [2Fe-2S]-[ferredoxin] + CoA = an acyl-CoA + 2 reduced [2Fe-2S]-[ferredoxin] + CO2 + H(+). Functionally, catalyzes the coenzyme A-dependent oxidative decarboxylation of different 2-oxoacids such as pyruvate, 2-oxobutyrate, glyoxylate and 2-oxoglutarate to form their CoA derivatives. This chain is 2-oxoacid:ferredoxin oxidoreductase 2, subunit beta, found in Aeropyrum pernix (strain ATCC 700893 / DSM 11879 / JCM 9820 / NBRC 100138 / K1).